The following is a 246-amino-acid chain: Probable septum site-determining protein MinC (246 aa).

The protein belongs to the MinC family. Interacts with MinD and FtsZ.

In terms of biological role, cell division inhibitor that blocks the formation of polar Z ring septums. Rapidly oscillates between the poles of the cell to destabilize FtsZ filaments that have formed before they mature into polar Z rings. Prevents FtsZ polymerization. This chain is Probable septum site-determining protein MinC, found in Pseudomonas savastanoi pv. phaseolicola (strain 1448A / Race 6) (Pseudomonas syringae pv. phaseolicola (strain 1448A / Race 6)).